Reading from the N-terminus, the 123-residue chain is Putative iron-sulfur cluster insertion protein ErpA (123 aa).

Iron-sulfur cluster-binding residues include C51, C115, and C117.

It belongs to the HesB/IscA family. Homodimer. The cofactor is iron-sulfur cluster.

Functionally, required for insertion of 4Fe-4S clusters. The sequence is that of Putative iron-sulfur cluster insertion protein ErpA from Burkholderia lata (strain ATCC 17760 / DSM 23089 / LMG 22485 / NCIMB 9086 / R18194 / 383).